Here is a 748-residue protein sequence, read N- to C-terminus: Pentatricopeptide repeat-containing protein At3g13880 (748 aa).

17 PPR repeats span residues 46-80, 81-111, 112-146, 147-181, 182-212, 213-247, 248-285, 286-316, 317-356, 357-391, 392-422, 423-457, 458-492, 493-523, 524-558, 559-589, and 595-629; these read DSEGYKILFQTAAKSGSVVLGKLAHGHMIKSSLNP, CLYLLNNLLNMYCKCRELGFARQLFDRMPER, NIISFNSLISGYTQMGFYEQAMELFLEAREANLKL, DKFTYAGALGFCGERCDLDLGELLHGLVVVNGLSQ, QVFLINVLIDMYSKCGKLDQAMSLFDRCDER, DQVSWNSLISGYVRVGAAEEPLNLLAKMHRDGLNL, TTYALGSVLKACCINLNEGFIEKGMAIHCYTAKLGMEF, DIVVRTALLDMYAKNGSLKEAIKLFSLMPSK, NVVTYNAMISGFLQMDEITDEASSEAFKLFMDMQRRGLEP, SPSTFSVVLKACSAAKTLEYGRQIHALICKNNFQS, DEFIGSALIELYALMGSTEDGMQCFASTSKQ, DIASWTSMIDCHVQNEQLESAFDLFRQLFSSHIRP, EEYTVSLMMSACADFAALSSGEQIQGYAIKSGIDA, FTSVKTSSISMYAKSGNMPLANQVFIEVQNP, DVATYSAMISSLAQHGSANEALNIFESMKTHGIKP, NQQAFLGVLIACCHGGLVTQGLKYFQCMKND, and NEKHFTCLVDLLGRTGRLSDAENLILSSGFQDHPV. Positions 630–705 are type E motif; sequence TWRALLSSCR…EPALSWIVIG (76 aa). Residues 706-736 form a type E(+) motif region; the sequence is NQTHSFAVADLSHPSSQMIYTMLETMDNVDF.

The protein belongs to the PPR family. PCMP-E subfamily.

This Arabidopsis thaliana (Mouse-ear cress) protein is Pentatricopeptide repeat-containing protein At3g13880 (PCMP-E89).